Here is a 204-residue protein sequence, read N- to C-terminus: MKNKVRVPFSPDHPLCAPKLFTISAPAGAGKTTLVRMLAREFPDSFQKTLSLTTRAPRPEEIPGVDYQFVSQEEFQRRLDNEDFLEWVALFGEYYGTSRLGIDEIWKSGRHAVAVIDVEGALVLQSKIPTVAIFISAPSQEELERRLKQRGSEQDTQRQERLQHSLIEQAAADKFEYVIINDDLEKSYEVLKSIFIAEEHRNVL.

The 179-residue stretch at 18–196 (PKLFTISAPA…SYEVLKSIFI (179 aa)) folds into the Guanylate kinase-like domain. ATP is bound at residue 25-32 (APAGAGKT).

This sequence belongs to the guanylate kinase family.

The protein localises to the cytoplasm. It catalyses the reaction GMP + ATP = GDP + ADP. Its function is as follows. Essential for recycling GMP and indirectly, cGMP. This chain is Guanylate kinase, found in Chlamydia abortus (strain DSM 27085 / S26/3) (Chlamydophila abortus).